An 802-amino-acid polypeptide reads, in one-letter code: Pyrophosphate-energized membrane proton pump 2 (802 aa).

A run of 6 helical transmembrane segments spans residues 45 to 65 (VLSI…ASTS), 66 to 86 (PIIV…IYLT), 118 to 138 (YSTI…IYLF), 160 to 180 (VAAF…GMWV), 206 to 226 (AGGF…AILY), and 246 to 266 (LPLL…FAQL). K273 contacts substrate. Residues D276, D280, and D306 each coordinate Mg(2+). 5 consecutive transmembrane segments (helical) span residues 348–368 (FILF…IGIL), 386–406 (MAVL…TFGA), 421–441 (WFNF…FVWI), 468–488 (IIAG…TISV), and 511–531 (GGLF…AYVL). 2 residues coordinate Mg(2+): D541 and N568. 4 helical membrane-spanning segments follow: residues 577–597 (FAIG…MDEV), 615–635 (VFVG…WACA), 686–706 (GALA…LGYY), and 716–736 (VVAS…LFLN). Residues D743 and D773 each coordinate Mg(2+). Position 776 (K776) interacts with substrate. Residues 782-802 (SIHVLIKMLATITLVMAPVFL) traverse the membrane as a helical segment.

The protein belongs to the H(+)-translocating pyrophosphatase (TC 3.A.10) family. K(+)-insensitive subfamily. In terms of assembly, monomer. As to expression, ubiquitous. Mostly expressed in cotyledons, roots and flowers. Especially high levels in trichomes, sepals and stamen filaments.

It is found in the golgi apparatus membrane. The enzyme catalyses diphosphate + H2O + H(+)(in) = 2 phosphate + 2 H(+)(out). With respect to regulation, activated by Mg(+) but not by K(+). Inhibited by Ca(2+). Functionally, pyrophosphatase active in both inorganic pyrophosphate hydrolysis and H(+) translocation. This Arabidopsis thaliana (Mouse-ear cress) protein is Pyrophosphate-energized membrane proton pump 2 (AVPL1).